We begin with the raw amino-acid sequence, 92 residues long: Small ribosomal subunit protein uS19 (92 aa).

This sequence belongs to the universal ribosomal protein uS19 family.

Its function is as follows. Protein S19 forms a complex with S13 that binds strongly to the 16S ribosomal RNA. This Rickettsia typhi (strain ATCC VR-144 / Wilmington) protein is Small ribosomal subunit protein uS19.